The following is a 284-amino-acid chain: tRNA-cytidine(32) 2-sulfurtransferase (284 aa).

The short motif at 45-50 (SGGKDS) is the PP-loop motif element. Residues C120, C123, and C211 each coordinate [4Fe-4S] cluster.

Belongs to the TtcA family. As to quaternary structure, homodimer. Requires Mg(2+) as cofactor. It depends on [4Fe-4S] cluster as a cofactor.

It is found in the cytoplasm. The catalysed reaction is cytidine(32) in tRNA + S-sulfanyl-L-cysteinyl-[cysteine desulfurase] + AH2 + ATP = 2-thiocytidine(32) in tRNA + L-cysteinyl-[cysteine desulfurase] + A + AMP + diphosphate + H(+). Its pathway is tRNA modification. Its function is as follows. Catalyzes the ATP-dependent 2-thiolation of cytidine in position 32 of tRNA, to form 2-thiocytidine (s(2)C32). The sulfur atoms are provided by the cysteine/cysteine desulfurase (IscS) system. The protein is tRNA-cytidine(32) 2-sulfurtransferase of Alcanivorax borkumensis (strain ATCC 700651 / DSM 11573 / NCIMB 13689 / SK2).